The chain runs to 322 residues: Phospho-N-acetylmuramoyl-pentapeptide-transferase (322 aa).

The next 10 helical transmembrane spans lie at 10-30 (YTALIAFLIVIIIGPIFIPML), 51-71 (NGTPTMGGIIMIVAILITGLT), 79-99 (MAVGLICIAGFGFIGFLDDFI), 107-127 (LGLKAYQKIILQVALSFYVAF), 146-166 (FVINVGILYIPIMMFIIVAIV), 178-198 (LASGVTLIVSVFFMLFASSIA), 203-223 (VAVLAAATVGACLGFLGFNSY), 227-247 (VFMGDTGSMALGGAVVAFSVL), 250-270 (SVLIIPIIGGIYFAEALSVLI), and 302-322 (VVFIFWIITVVLAWISIIAVF).

This sequence belongs to the glycosyltransferase 4 family. MraY subfamily. Requires Mg(2+) as cofactor.

The protein localises to the cell membrane. It carries out the reaction UDP-N-acetyl-alpha-D-muramoyl-L-alanyl-gamma-D-glutamyl-meso-2,6-diaminopimeloyl-D-alanyl-D-alanine + di-trans,octa-cis-undecaprenyl phosphate = di-trans,octa-cis-undecaprenyl diphospho-N-acetyl-alpha-D-muramoyl-L-alanyl-D-glutamyl-meso-2,6-diaminopimeloyl-D-alanyl-D-alanine + UMP. It participates in cell wall biogenesis; peptidoglycan biosynthesis. In terms of biological role, catalyzes the initial step of the lipid cycle reactions in the biosynthesis of the cell wall peptidoglycan: transfers peptidoglycan precursor phospho-MurNAc-pentapeptide from UDP-MurNAc-pentapeptide onto the lipid carrier undecaprenyl phosphate, yielding undecaprenyl-pyrophosphoryl-MurNAc-pentapeptide, known as lipid I. This is Phospho-N-acetylmuramoyl-pentapeptide-transferase from Clostridioides difficile (strain 630) (Peptoclostridium difficile).